A 338-amino-acid chain; its full sequence is 1-aminocyclopropane-1-carboxylate deaminase (338 aa).

Lys-51 is subject to N6-(pyridoxal phosphate)lysine. Ser-78 functions as the Nucleophile in the catalytic mechanism.

Belongs to the ACC deaminase/D-cysteine desulfhydrase family. In terms of assembly, homotrimer. Pyridoxal 5'-phosphate serves as cofactor.

It carries out the reaction 1-aminocyclopropane-1-carboxylate + H2O = 2-oxobutanoate + NH4(+). Its function is as follows. Catalyzes a cyclopropane ring-opening reaction, the irreversible conversion of 1-aminocyclopropane-1-carboxylate (ACC) to ammonia and alpha-ketobutyrate. Allows growth on ACC as a nitrogen source. The chain is 1-aminocyclopropane-1-carboxylate deaminase from Variovorax paradoxus.